The chain runs to 545 residues: Probable protein kinase UbiB (545 aa).

The 379-residue stretch at 124–502 (DFDETPLASA…RRSQGLARFY (379 aa)) folds into the Protein kinase domain. Residues 130-138 (LASASIAQV) and Lys-153 contribute to the ATP site. The active-site Proton acceptor is the Asp-288. 2 consecutive transmembrane segments (helical) span residues 498–517 (LARFYFGIGATLVVCSAILF) and 521–540 (VETIPVASAAMGVTFWLLGW).

This sequence belongs to the ABC1 family. UbiB subfamily.

It is found in the cell inner membrane. Its pathway is cofactor biosynthesis; ubiquinone biosynthesis [regulation]. Its function is as follows. Is probably a protein kinase regulator of UbiI activity which is involved in aerobic coenzyme Q (ubiquinone) biosynthesis. The sequence is that of Probable protein kinase UbiB from Photobacterium profundum (strain SS9).